Reading from the N-terminus, the 148-residue chain is UPF0178 protein SUN_1096 (148 aa).

Belongs to the UPF0178 family.

This is UPF0178 protein SUN_1096 from Sulfurovum sp. (strain NBC37-1).